Here is a 209-residue protein sequence, read N- to C-terminus: Large ribosomal subunit protein uL3 (209 aa).

The interval Ala119–Met145 is disordered.

It belongs to the universal ribosomal protein uL3 family. As to quaternary structure, part of the 50S ribosomal subunit. Forms a cluster with proteins L14 and L19.

In terms of biological role, one of the primary rRNA binding proteins, it binds directly near the 3'-end of the 23S rRNA, where it nucleates assembly of the 50S subunit. The polypeptide is Large ribosomal subunit protein uL3 (Staphylococcus aureus (strain COL)).